Reading from the N-terminus, the 239-residue chain is Ribosomal RNA small subunit methyltransferase G (239 aa).

Residues Gly77, Phe82, 128–129 (AE), and Arg146 each bind S-adenosyl-L-methionine. The tract at residues 214–239 (IDKKRQTPKKYPRKPGTPNKTPLLEK) is disordered.

This sequence belongs to the methyltransferase superfamily. RNA methyltransferase RsmG family.

The protein resides in the cytoplasm. Functionally, specifically methylates the N7 position of guanine in position 535 of 16S rRNA. The polypeptide is Ribosomal RNA small subunit methyltransferase G (Staphylococcus aureus (strain Mu3 / ATCC 700698)).